The primary structure comprises 109 residues: Ig kappa chain V region 3374 (109 aa).

The segment at 1 to 24 is framework-1; the sequence is ADIVMTQTPASVSAAVGGTVTINC. Residues 25-35 form a complementarity-determining-1 region; that stretch reads QASQNIDSWLA. Positions 36–50 are framework-2; it reads WYQQKPGQPPKVLIY. Residues 51-57 form a complementarity-determining-2 region; that stretch reads RTSTLAS. Residues 58 to 89 form a framework-3 region; sequence GVPSRFKGSRSGTEFTLTISDLECADAATYYC. The complementarity-determining-3 stretch occupies residues 90–98; sequence QSYYSISSA. Positions 99-108 are framework-4; it reads FGGGTEVVVK.

This chain is Ig kappa chain V region 3374, found in Oryctolagus cuniculus (Rabbit).